The following is a 712-amino-acid chain: Frizzled-6 (712 aa).

Positions 1-18 (MEMFTFLLTCVFLPFVRG) are cleaved as a signal peptide. The FZ domain occupies 19–132 (HSLFTCEPIT…CDRLQYCDET (114 aa)). At 19–201 (HSLFTCEPIT…SDELEFAKSF (183 aa)) the chain is on the extracellular side. Intrachain disulfides connect cysteine 24–cysteine 85, cysteine 32–cysteine 78, cysteine 69–cysteine 106, cysteine 95–cysteine 129, and cysteine 99–cysteine 123. Asparagine 38 carries N-linked (GlcNAc...) asparagine glycosylation. Residues 202 to 222 (IGIVSIFCLCATLFTFLTFLI) traverse the membrane as a helical segment. Residues 223-233 (DVKRFRYPERP) are Cytoplasmic-facing. Residues 234–254 (IIYYSVCYSIVSLMYFIGFLL) form a helical membrane-spanning segment. Topologically, residues 255-284 (GDRTACNKADEKLELGDTVVLGSQNKACTV) are extracellular. A helical membrane pass occupies residues 285-305 (LFMFLYFFTMAGTVWWVILTI). The Cytoplasmic segment spans residues 306 to 324 (TWFLAAGRKWSCEAIEQKA). The helical transmembrane segment at 325–345 (VWFHAVAWGIPGFLTVMLLAM) threads the bilayer. The Extracellular segment spans residues 346-370 (NKVEGDNISGVCFVGLYDLDASRYF). Asparagine 352 carries N-linked (GlcNAc...) asparagine glycosylation. A helical transmembrane segment spans residues 371-391 (VLLPLCLCVFVGLSLLLAGII). At 392-416 (SLNHVRQVIQHDGRNQEKLKKFMIR) the chain is on the cytoplasmic side. Residues 417–437 (IGVFSGLYLVPLVTLLGCYVY) form a helical membrane-spanning segment. Residues 438-473 (EQVNRITWEITWVSDHCRQYHIPCPYQAKTETRPEL) lie on the Extracellular side of the membrane. Residues 474 to 494 (ALFMIKYLMTLIVGISAVFWV) form a helical membrane-spanning segment. The Cytoplasmic segment spans residues 495–712 (GSKKTCTEWA…EHGTGSHSDT (218 aa)). Positions 498–503 (KTCTEW) match the Lys-Thr-X-X-X-Trp motif, mediates interaction with the PDZ domain of Dvl family members motif. Positions 588–712 (EIQTSPETSV…EHGTGSHSDT (125 aa)) are disordered. Basic and acidic residues-rich tracts occupy residues 628 to 637 (LCEEQADRKG) and 652 to 664 (TRSE…KSDV). The span at 668 to 693 (GPMQSSSLQVPGSSEPGSLKGSTSLL) shows a compositional bias: polar residues. Over residues 700–712 (GRKEHGTGSHSDT) the composition is skewed to basic and acidic residues.

Belongs to the G-protein coupled receptor Fz/Smo family. As to quaternary structure, interacts with LMBR1L. Post-translationally, ubiquitinated by ZNRF3, leading to its degradation by the proteasome.

The protein resides in the membrane. It is found in the cell membrane. Its subcellular location is the cell surface. The protein localises to the apical cell membrane. It localises to the cytoplasmic vesicle membrane. The protein resides in the endoplasmic reticulum membrane. Functionally, receptor for Wnt proteins. Most of frizzled receptors are coupled to the beta-catenin canonical signaling pathway, which leads to the activation of disheveled proteins, inhibition of GSK-3 kinase, nuclear accumulation of beta-catenin and activation of Wnt target genes. A second signaling pathway involving PKC and calcium fluxes has been seen for some family members, but it is not yet clear if it represents a distinct pathway or if it can be integrated in the canonical pathway, as PKC seems to be required for Wnt-mediated inactivation of GSK-3 kinase. Both pathways seem to involve interactions with G-proteins. Activation by Wnt5A stimulates PKC activity via a G-protein-dependent mechanism. Involved in transduction and intercellular transmission of polarity information during tissue morphogenesis and/or in differentiated tissues. Together with FZD3, is involved in the neural tube closure and plays a role in the regulation of the establishment of planar cell polarity (PCP), particularly in the orientation of asymmetric bundles of stereocilia on the apical faces of a subset of auditory and vestibular sensory cells located in the inner ear. The chain is Frizzled-6 (FZD6) from Canis lupus familiaris (Dog).